The primary structure comprises 405 residues: Acetate kinase (405 aa).

N7 contributes to the Mg(2+) binding site. K14 contributes to the ATP binding site. R98 contacts substrate. D155 serves as the catalytic Proton donor/acceptor. Residues H214–G218, D289–R291, and G337–N341 each bind ATP. E390 is a binding site for Mg(2+).

Belongs to the acetokinase family. In terms of assembly, homodimer. Mg(2+) is required as a cofactor. It depends on Mn(2+) as a cofactor.

It localises to the cytoplasm. The catalysed reaction is acetate + ATP = acetyl phosphate + ADP. It functions in the pathway metabolic intermediate biosynthesis; acetyl-CoA biosynthesis; acetyl-CoA from acetate: step 1/2. Catalyzes the formation of acetyl phosphate from acetate and ATP. Can also catalyze the reverse reaction. The protein is Acetate kinase of Gloeothece citriformis (strain PCC 7424) (Cyanothece sp. (strain PCC 7424)).